Consider the following 484-residue polypeptide: MGQLVSFFQEIPNIIQEAINIALIAVSLIAILKGLVNLWKSGLFQLLVFLILAGRSCSFKIGRSTELQNITINMLKVFEDHPISCTVNKTLYYIRESENATWCVEIAALDMSVLLSPHDPRVMGNLSNCVHPDIKHRSELLGLLEWILRALKYDFLNYPPLLCEKVTSSVNETRIQINVSDSAGSHDFKETMLQRLAILFGTKLMFDKTPKQFIVIRNQTWVNQCKSNHVNTLHLMMANAGHAVKLRRLQGVFTWTITDAAGNDMPGGYCLERWMLVTSDLKCFGNTALAKCNLNHDSEFCDMLKLFEFNKKAIESLNDNTKNKVNLLTHSINALISDNLLMKNRLKELLDTPYCNYTKFWYVNHTITGEHSLPRCWMVKNNSYLNESEFRNDWILESDHLLSEMLNKEYFDRQGKTPITLVDICFWSTLFFTTTLFLHLVGFPTHRHIQGEPCPLPHKLNSNGGCRCGRYPELKKPTTWHRKH.

Residue Gly-2 is the site of N-myristoyl glycine; by host attachment. At 2-17 (GQLVSFFQEIPNIIQE) the chain is on the extracellular side. A helical membrane pass occupies residues 18–33 (AINIALIAVSLIAILK). Over 34 to 58 (GLVNLWKSGLFQLLVFLILAGRSCS) the chain is Cytoplasmic. Position 57 (Cys-57) interacts with Zn(2+). The Extracellular portion of the chain corresponds to 59–423 (FKIGRSTELQ…QGKTPITLVD (365 aa)). 4 disulfides stabilise this stretch: Cys-85-Cys-225, Cys-270-Cys-283, Cys-292-Cys-301, and Cys-355-Cys-376. 4 N-linked (GlcNAc...) asparagine; by host glycosylation sites follow: Asn-88, Asn-125, Asn-178, and Asn-218. N-linked (GlcNAc...) asparagine; by host glycosylation is found at Asn-356, Asn-364, Asn-381, and Asn-386. Residues 424–444 (ICFWSTLFFTTTLFLHLVGFP) form a helical membrane-spanning segment. The Cytoplasmic segment spans residues 445 to 484 (THRHIQGEPCPLPHKLNSNGGCRCGRYPELKKPTTWHRKH). Positions 446, 448, 454, 458, 466, 468, and 484 each coordinate Zn(2+).

Belongs to the arenaviridae GPC protein family. Interacts with glycoprotein G2. Part of the GP complex (GP-C) together with glycoprotein G1 and glycoprotein G2. The GP-complex interacts with protein Z, which interacts with ribonucleocapsid; these interactions may induce virion budding. As to quaternary structure, homotrimer; disulfide-linked. In pre-fusion state, G1 homotrimers bind G2 homotrimers via ionic interactions. Part of the GP complex (GP-C) together with glycoprotein G2 and the stable signal peptide. The GP-complex interacts with protein Z, which interacts with ribonucleocapsid; these interactions may induce virion budding. In terms of assembly, homotrimer. Interacts with the stable signal peptide. In pre-fusion state, G2 homotrimers bind G1 homotrimers via ionic interactions. Part of the GP complex (GP-C) together with glycoprotein G1 and the stable signal peptide. Acidification in the endosome triggers rearrangements, which ultimately leads to a 6 helix bundle formed by the two heptad repeat domains (HR1 and HR2) in post-fusion state. The GP-complex interacts with protein Z, which interacts with ribonucleocapsid; these interactions may induce virion budding. Post-translationally, specific enzymatic cleavages in vivo yield mature proteins. GP-C polyprotein is cleaved in the endoplasmic reticulum by the host protease MBTPS1. Only cleaved glycoprotein is incorporated into virions. The SSP remains stably associated with the GP complex following cleavage by signal peptidase and plays crucial roles in the trafficking of GP through the secretory pathway. In terms of processing, myristoylation is necessary for GP2-mediated fusion activity.

Its subcellular location is the virion membrane. The protein resides in the host endoplasmic reticulum membrane. The protein localises to the host Golgi apparatus membrane. It is found in the host cell membrane. Functions as a cleaved signal peptide that is retained as the third component of the GP complex (GP-C). Helps to stabilize the spike complex in its native conformation. The SSP is required for efficient glycoprotein expression, post-translational maturation cleavage of G1 and G2, glycoprotein transport to the cell surface plasma membrane, formation of infectious virus particles, and acid pH-dependent glycoprotein-mediated cell fusion. Its function is as follows. Glycoprotein G1: Forms the virion spikes together with glycoprotein G2. The glycoprotein spike trimers are connected to the underlying matrix. Interacts with the host receptor leading to virus endocytosis. Functionally, forms the virion spikes together with glycoprotein G1. The glycoprotein spike trimers are connected to the underlying matrix. Class I viral fusion protein that directs fusion of viral and host endosomal membranes, leading to delivery of the nucleocapsid into the cytoplasm. Membrane fusion is mediated by irreversible conformational changes induced by acidification. The polypeptide is Pre-glycoprotein polyprotein GP complex (Chapare mammarenavirus (isolate Human/Bolivia/810419/2003)).